We begin with the raw amino-acid sequence, 1438 residues long: MAMTNEEKFKILADQIKITEHLDSEILENSELTRVDVKTSDRTWVFQITFPHFLTIENYLLFTGAIIEEFKTIADVKCNFTVKDKTNQDEFAIKYFSHCIDQTKLSPKVKGQLKQKRLIMSGDVLKVMCQNDVERDHFDKACNGSLIAAYQQCGFNISKVVFETDSAVNDGDLASLEAHIQEEDEKSAREATEKLEKMKAEKAKQQDNNESDVSKCQIGKPIQVENVRQIDSIIEEEFKAAVEGVIFDINLKELKSGRHIVELKVTDYTDSLVLKMFTRKNKDDLAHFKALSVGKWVRAQGRIEEDTFVRDLVMMMSDIEEIKKATKQDKAEDKRVEFHLHTSMSQMDGIPNISDYVDQAAKWGHKAIAVTDHNVVQAFPDAHSAAEKNGIKMIYGMEGMLVDDGVPIAYKPKDCDLKTATYVVFDVETTGLSNQYDKIIELAAVKVKDGEIIDKFERFSNPHERLSETIKNLTHISDDMLVDAPEIEEVLTEFKSWVGDAIFVAHNASFDMGFIDTGYEHVGIGASTNGVIDTLELSRTINTEYGKHGLNFLAKKYGVELTQHHRAIYDTEATAYMFIKMLKQLEALGVHNHQDINTSLSNEDAYKRARPNHVTLIVQNQDGLKNLFKIVSASLVQYYYRTPRIPRSLLDEYREGILVGSACDEGEVFTAVMQKDQSQVERIAKYYDFIEVQPPALYQDLIDRELVRDNETLHEIYNRLIRAGDVNNIPVIATGNAHYLNEHDAIARKILIAAQPGNPLNRSTLPKAHFRTTDEMLDELHFLGEEKAYELVVQNTNDLADKIERVVPIKDELFTPRMEGANEEIREMSYDNAKALYGDDLPQIVIDRLEKELESIIGNGFSVIYLISQRLVKKSLNDGYLVGSRGSVGSSFVATMTEITEVNPLPPHYICPECKQSEFFDDGSVGSGFDLPDKKCESCGCDLIKEGQDIPFETFLGFKGDKVPDIDLNFSGEYQPEAHNYTKELFGEDKVFRAGTIGTVAEKTAFGFVKGYLNDQGIHKRGAEIDRLVKGCTGVKRTTGQHPGGIIVVPDYMDIYDFTPVQFPADDQGSSWMTTHFDFHSIHDNVLKLDILGHDDPTMIRMLQDLSGIDPKTIPVDDKETMGIFSSPEPLGVTSDEILCKTGTFGVPEFGTGFVRQMLEDTKPTTFSELVRISGLSHGTDVWLGNAQDLIRSGKCDLASVICCRDDIMVYLMYNGLEPSLAFKTMEFVRKGKGLTDDMVEAMVDNEVPDWYLDSCRKIKYMFPKAHAAAYVLMAVRIAYFKVHYPLYYYASYFTVRASDFDLISMIKDKESIRNTVNDMYSRYMDLAKKEKDTLTVLEIMNEMAQRGYRMQPISLEKSKAFEFIIEGDTLIPPFIAVPGLGENVAQRIVEARDEGPFLSKEDLNKKAGLSQKVIEYLDELGSLPNLPDKAQLSIFDM.

Positions 422 to 578 (YVVFDVETTG…YDTEATAYMF (157 aa)) constitute an Exonuclease domain.

Belongs to the DNA polymerase type-C family. PolC subfamily.

The protein resides in the cytoplasm. The enzyme catalyses DNA(n) + a 2'-deoxyribonucleoside 5'-triphosphate = DNA(n+1) + diphosphate. Functionally, required for replicative DNA synthesis. This DNA polymerase also exhibits 3' to 5' exonuclease activity. The sequence is that of DNA polymerase III PolC-type from Staphylococcus saprophyticus subsp. saprophyticus (strain ATCC 15305 / DSM 20229 / NCIMB 8711 / NCTC 7292 / S-41).